A 136-amino-acid polypeptide reads, in one-letter code: MSLLKEFKAFASRGNVIDMAVGIIIGAAFGKIVSSFVADIIMPPIGIILGGVNFSDLSFVLLAAQGDAPAVVIAYGKFIQTVVDFTIIAFAIFMGLKAINSLKRKEEEAPKAPPAPTKDQELLSEIRDLLKAQQDK.

Transmembrane regions (helical) follow at residues 9-29, 32-52, 54-74, and 79-99; these read AFASRGNVIDMAVGIIIGAAF, IVSSFVADIIMPPIGIILGGV, FSDLSFVLLAAQGDAPAVVIA, and IQTVVDFTIIAFAIFMGLKAI.

This sequence belongs to the MscL family. Homopentamer.

It localises to the cell inner membrane. Functionally, channel that opens in response to stretch forces in the membrane lipid bilayer. May participate in the regulation of osmotic pressure changes within the cell. This Vibrio cholerae serotype O1 (strain ATCC 39541 / Classical Ogawa 395 / O395) protein is Large-conductance mechanosensitive channel.